We begin with the raw amino-acid sequence, 160 residues long: ATP synthase subunit b (160 aa).

A helical transmembrane segment spans residues 15-35 (LVIVIGLLFWFLRGFLGGILE).

This sequence belongs to the ATPase B chain family. In terms of assembly, F-type ATPases have 2 components, F(1) - the catalytic core - and F(0) - the membrane proton channel. F(1) has five subunits: alpha(3), beta(3), gamma(1), delta(1), epsilon(1). F(0) has four main subunits: a(1), b(1), b'(1) and c(10-14). The alpha and beta chains form an alternating ring which encloses part of the gamma chain. F(1) is attached to F(0) by a central stalk formed by the gamma and epsilon chains, while a peripheral stalk is formed by the delta, b and b' chains.

Its subcellular location is the cellular thylakoid membrane. In terms of biological role, f(1)F(0) ATP synthase produces ATP from ADP in the presence of a proton or sodium gradient. F-type ATPases consist of two structural domains, F(1) containing the extramembraneous catalytic core and F(0) containing the membrane proton channel, linked together by a central stalk and a peripheral stalk. During catalysis, ATP synthesis in the catalytic domain of F(1) is coupled via a rotary mechanism of the central stalk subunits to proton translocation. Functionally, component of the F(0) channel, it forms part of the peripheral stalk, linking F(1) to F(0). This Synechococcus sp. (strain CC9605) protein is ATP synthase subunit b.